Here is a 399-residue protein sequence, read N- to C-terminus: Formate-dependent phosphoribosylglycinamide formyltransferase (399 aa).

Residues 22–23 (EL) and glutamate 82 contribute to the N(1)-(5-phospho-beta-D-ribosyl)glycinamide site. ATP is bound by residues arginine 114, lysine 155, 160–165 (SSGKGQ), 195–198 (EKMI), and glutamate 203. Residues 119–308 (RLAAETLHLL…EFALHVRAFL (190 aa)) enclose the ATP-grasp domain. Mg(2+)-binding residues include glutamate 267 and glutamate 279. N(1)-(5-phospho-beta-D-ribosyl)glycinamide is bound by residues aspartate 286, lysine 355, and 362–363 (RR).

It belongs to the PurK/PurT family. In terms of assembly, homodimer.

The catalysed reaction is N(1)-(5-phospho-beta-D-ribosyl)glycinamide + formate + ATP = N(2)-formyl-N(1)-(5-phospho-beta-D-ribosyl)glycinamide + ADP + phosphate + H(+). Its pathway is purine metabolism; IMP biosynthesis via de novo pathway; N(2)-formyl-N(1)-(5-phospho-D-ribosyl)glycinamide from N(1)-(5-phospho-D-ribosyl)glycinamide (formate route): step 1/1. Functionally, involved in the de novo purine biosynthesis. Catalyzes the transfer of formate to 5-phospho-ribosyl-glycinamide (GAR), producing 5-phospho-ribosyl-N-formylglycinamide (FGAR). Formate is provided by PurU via hydrolysis of 10-formyl-tetrahydrofolate. In Proteus mirabilis (strain HI4320), this protein is Formate-dependent phosphoribosylglycinamide formyltransferase.